Reading from the N-terminus, the 149-residue chain is Myosin light chain 1 (149 aa).

3 EF-hand domains span residues 2-37, 81-116, and 117-149; these read SATRANKDIFTLFDKKGQGAIAKDSLGDYLRAIGYN, AKTEDFVKAFQVFDKESTGKVSVGDLRYMLTGLGEK, and LTDAEVDELLKGVEVDSNGEIDYKKFIEDVLRQ. Positions 15, 94, 98, 100, and 105 each coordinate Ca(2+). Residue K116 forms a Glycyl lysine isopeptide (Lys-Gly) (interchain with G-Cter in ubiquitin) linkage. D123, K127, and D132 together coordinate Ca(2+).

Interacts with MYO1, MYO2 and IQG1 by binding to their IQ domains. Interacts with SEC4.

It localises to the bud neck. The protein localises to the bud tip. Essential light chain for the class II conventional myosin MYO1. Also acts as light chain for the class V unconventional myosin MYO2 and for IQG1. Involved in the assembly of the contractile actomyosin ring at the bud neck during cytokinesis by recruiting IQG1 to the bud neck. Also required for chitin and MYO2-dependent secretory vesicle deposition to the center of the bud neck for septum formation. May stabilize MYO2 by binding to its IQ domains. Its major function is probably not to regulate MYO1 activity, but rather to coordinate actin ring formation and targeted membrane deposition during cytokinesis via its interactions with MYO1, IQG1 and MYO2. The polypeptide is Myosin light chain 1 (MLC1) (Saccharomyces cerevisiae (strain ATCC 204508 / S288c) (Baker's yeast)).